Consider the following 622-residue polypeptide: Histone-arginine methyltransferase CARMER (622 aa).

Residues 118-425 (ASQYFQFYGY…QRQSYDVEID (308 aa)) enclose the SAM-dependent MTase PRMT-type domain. 6 residues coordinate S-adenosyl-L-methionine: Gln131, Arg140, Gly164, Glu186, Glu215, and Thr243. Asymmetric dimethylarginine; by autocatalysis is present on Arg478. Disordered regions lie at residues 513–556 (ANGG…QQQQ) and 602–622 (QPIL…NQFY). A compositionally biased stretch (low complexity) spans 536–556 (QQQQQQQQQQQQAAVGPQQQQ).

This sequence belongs to the class I-like SAM-binding methyltransferase superfamily. Protein arginine N-methyltransferase family. Homodimer. Post-translationally, the dimethylated protein is the major form.

Its subcellular location is the cytoplasm. The protein localises to the nucleus. It catalyses the reaction L-arginyl-[protein] + 2 S-adenosyl-L-methionine = N(omega),N(omega)-dimethyl-L-arginyl-[protein] + 2 S-adenosyl-L-homocysteine + 2 H(+). Methylates (mono- and asymmetric dimethylation) the guanidino nitrogens of arginyl residues in proteins. May methylate histone H3 at 'Arg-17' and activate transcription via chromatin remodeling. In Anopheles gambiae (African malaria mosquito), this protein is Histone-arginine methyltransferase CARMER.